A 136-amino-acid polypeptide reads, in one-letter code: Protein PsiE homolog (136 aa).

Helical transmembrane passes span 15–35 (AMQA…VVFL), 58–78 (VEGL…VKYF), 82–102 (FHFP…RLII), and 108–128 (PLAV…LWLC).

Belongs to the PsiE family.

It localises to the cell inner membrane. This Klebsiella pneumoniae subsp. pneumoniae (strain ATCC 700721 / MGH 78578) protein is Protein PsiE homolog.